We begin with the raw amino-acid sequence, 664 residues long: Alcohol oxidase (664 aa).

Residue 8 to 39 (DIIVVGGGSTGCCIAGRLANLDDQNLTVALIE) participates in FAD binding. The Proton acceptor role is filled by histidine 568. Positions 662–664 (ARF) match the Microbody targeting signal motif.

This sequence belongs to the GMC oxidoreductase family. As to quaternary structure, homooctamer. FAD is required as a cofactor.

Its subcellular location is the peroxisome matrix. The enzyme catalyses a primary alcohol + O2 = an aldehyde + H2O2. The protein operates within energy metabolism; methane degradation. Catalyzes the oxidation of methanol to formaldehyde and hydrogen peroxide, the first step in the methanol utilization pathway of methylotrophic yeasts. The polypeptide is Alcohol oxidase (MOX) (Pichia angusta (Yeast)).